A 102-amino-acid chain; its full sequence is Large ribosomal subunit protein bL21 (102 aa).

It belongs to the bacterial ribosomal protein bL21 family. Part of the 50S ribosomal subunit. Contacts protein L20.

Its function is as follows. This protein binds to 23S rRNA in the presence of protein L20. This chain is Large ribosomal subunit protein bL21, found in Nitratidesulfovibrio vulgaris (strain DSM 19637 / Miyazaki F) (Desulfovibrio vulgaris).